A 328-amino-acid chain; its full sequence is DNA-directed RNA polymerase subunit alpha (328 aa).

An alpha N-terminal domain (alpha-NTD) region spans residues 1–230 (MSNHGLQMPE…DHVSFFIQLE (230 aa)). Residues 248-328 (RIRELLAQPV…EEYLEEKKAS (81 aa)) are alpha C-terminal domain (alpha-CTD).

This sequence belongs to the RNA polymerase alpha chain family. Homodimer. The RNAP catalytic core consists of 2 alpha, 1 beta, 1 beta' and 1 omega subunit. When a sigma factor is associated with the core the holoenzyme is formed, which can initiate transcription.

It carries out the reaction RNA(n) + a ribonucleoside 5'-triphosphate = RNA(n+1) + diphosphate. Functionally, DNA-dependent RNA polymerase catalyzes the transcription of DNA into RNA using the four ribonucleoside triphosphates as substrates. The polypeptide is DNA-directed RNA polymerase subunit alpha (Salinibacter ruber (strain DSM 13855 / M31)).